Here is a 359-residue protein sequence, read N- to C-terminus: Nicotinate-nucleotide--dimethylbenzimidazole phosphoribosyltransferase (359 aa).

Glutamate 318 (proton acceptor) is an active-site residue.

Belongs to the CobT family. In terms of assembly, homodimer.

It catalyses the reaction 5,6-dimethylbenzimidazole + nicotinate beta-D-ribonucleotide = alpha-ribazole 5'-phosphate + nicotinate + H(+). Its pathway is nucleoside biosynthesis; alpha-ribazole biosynthesis; alpha-ribazole from 5,6-dimethylbenzimidazole: step 1/2. Its function is as follows. Catalyzes the synthesis of alpha-ribazole-5'-phosphate from nicotinate mononucleotide (NAMN) and 5,6-dimethylbenzimidazole (DMB). In Escherichia coli (strain UTI89 / UPEC), this protein is Nicotinate-nucleotide--dimethylbenzimidazole phosphoribosyltransferase.